A 234-amino-acid chain; its full sequence is Demethylmenaquinone methyltransferase (234 aa).

Residues threonine 58, aspartate 79, and 104–105 (NA) contribute to the S-adenosyl-L-methionine site.

It belongs to the class I-like SAM-binding methyltransferase superfamily. MenG/UbiE family.

The catalysed reaction is a 2-demethylmenaquinol + S-adenosyl-L-methionine = a menaquinol + S-adenosyl-L-homocysteine + H(+). It participates in quinol/quinone metabolism; menaquinone biosynthesis; menaquinol from 1,4-dihydroxy-2-naphthoate: step 2/2. Its function is as follows. Methyltransferase required for the conversion of demethylmenaquinol (DMKH2) to menaquinol (MKH2). This is Demethylmenaquinone methyltransferase from Lysinibacillus sphaericus (strain C3-41).